The primary structure comprises 207 residues: Casparian strip membrane protein 1 (207 aa).

Residues 1-12 show a composition bias toward polar residues; the sequence is MEGESTAVNITE. The tract at residues 1-24 is disordered; that stretch reads MEGESTAVNITETPKERKGKAPLL. The Cytoplasmic portion of the chain corresponds to 1–48; the sequence is MEGESTAVNITETPKERKGKAPLLAPPPASGGIKTIVQKAPKGGYKRG. Residues 49 to 69 form a helical membrane-spanning segment; sequence LAVFDVVLRIAGIAAALGAVI. The Extracellular portion of the chain corresponds to 70–98; the sequence is AMGSTDQTLPFFTQFFQFKAEFDDLPVFT. A helical membrane pass occupies residues 99-119; the sequence is FFVIANAITAAYLALSIPISI. At 120–138 the chain is on the cytoplasmic side; that stretch reads VCIIRPHLVGPRVLLTFLD. Residues 139–159 traverse the membrane as a helical segment; it reads TVMVGLTTAAAGGAASIVYLA. At 160 to 184 the chain is on the extracellular side; it reads HNGNSDANWPAICQQFNDFCQEVSG. Residues 185–205 traverse the membrane as a helical segment; sequence AVVASFITVVVLMFLIVLSAF. The Cytoplasmic portion of the chain corresponds to 206 to 207; it reads SL.

This sequence belongs to the Casparian strip membrane proteins (CASP) family. Homodimer and heterodimers.

It localises to the cell membrane. In terms of biological role, regulates membrane-cell wall junctions and localized cell wall deposition. Required for establishment of the Casparian strip membrane domain (CSD) and the subsequent formation of Casparian strips, a cell wall modification of the root endodermis that determines an apoplastic barrier between the intraorganismal apoplasm and the extraorganismal apoplasm and prevents lateral diffusion. This Taraxacum kok-saghyz (Russian dandelion) protein is Casparian strip membrane protein 1.